The following is a 638-amino-acid chain: Threonine--tRNA ligase (638 aa).

Residues Met-1 to Tyr-59 enclose the TGS domain. Residues Asp-243–Pro-536 form a catalytic region. Positions 336, 387, and 513 each coordinate Zn(2+).

This sequence belongs to the class-II aminoacyl-tRNA synthetase family. As to quaternary structure, homodimer. Zn(2+) serves as cofactor.

The protein resides in the cytoplasm. The catalysed reaction is tRNA(Thr) + L-threonine + ATP = L-threonyl-tRNA(Thr) + AMP + diphosphate + H(+). Its function is as follows. Catalyzes the attachment of threonine to tRNA(Thr) in a two-step reaction: L-threonine is first activated by ATP to form Thr-AMP and then transferred to the acceptor end of tRNA(Thr). Also edits incorrectly charged L-seryl-tRNA(Thr). This Aquifex aeolicus (strain VF5) protein is Threonine--tRNA ligase.